The following is a 455-amino-acid chain: Dihydrolipoyllysine-residue succinyltransferase component of 2-oxoglutarate dehydrogenase complex, mitochondrial (455 aa).

The transit peptide at 1 to 68 directs the protein to the mitochondrion; sequence MLSRSRCVSR…RFFRTTAVCK (68 aa). One can recognise a Lipoyl-binding domain in the interval 71-145; the sequence is VITVKTPAFA…EGGTPLFTLR (75 aa). At serine 82 the chain carries Phosphoserine. Lysine 111 carries the post-translational modification N6-lipoyllysine. Positions 153–173 are enriched in low complexity; the sequence is KAKPAEAPAAAAPKAEPAVSA. Residues 153 to 214 form a disordered region; that stretch reads KAKPAEAPAA…KPTAAPPVAE (62 aa). N6-acetyllysine is present on lysine 155. The span at 174-195 shows a compositional bias: pro residues; that stretch reads VPPPPAASIPTQMPPVPSPPQP. The segment at 221 to 453 is catalytic; it reads LRAEHREKMN…AVEDPRVLLL (233 aa). N6-acetyllysine is present on residues lysine 269, lysine 274, lysine 275, lysine 279, and lysine 309. Active-site residues include histidine 426 and aspartate 430.

The protein belongs to the 2-oxoacid dehydrogenase family. As to quaternary structure, the 2-oxoglutarate dehydrogenase complex is composed of OGDH (2-oxoglutarate dehydrogenase; E1), DLST (dihydrolipoamide succinyltransferase; E2), DLD (dihydrolipoamide dehydrogenase; E3) and the assembly factor KGD4. It contains multiple copies of the three enzymatic components (E1, E2 and E3). In the nucleus, the 2-oxoglutarate dehydrogenase complex associates with KAT2A. Interacts with ABHD11; this interaction maintains the functional lipoylation of the 2-oxoglutarate dehydrogenase complex. (R)-lipoate is required as a cofactor.

It localises to the mitochondrion matrix. It is found in the nucleus. It catalyses the reaction N(6)-[(R)-dihydrolipoyl]-L-lysyl-[protein] + succinyl-CoA = N(6)-[(R)-S(8)-succinyldihydrolipoyl]-L-lysyl-[protein] + CoA. Its pathway is amino-acid degradation; L-lysine degradation via saccharopine pathway; glutaryl-CoA from L-lysine: step 6/6. It functions in the pathway carbohydrate metabolism; tricarboxylic acid cycle. Functionally, dihydrolipoamide succinyltransferase (E2) component of the 2-oxoglutarate dehydrogenase complex. The 2-oxoglutarate dehydrogenase complex catalyzes the overall conversion of 2-oxoglutarate to succinyl-CoA and CO(2). The 2-oxoglutarate dehydrogenase complex is mainly active in the mitochondrion. A fraction of the 2-oxoglutarate dehydrogenase complex also localizes in the nucleus and is required for lysine succinylation of histones: associates with KAT2A on chromatin and provides succinyl-CoA to histone succinyltransferase KAT2A. The chain is Dihydrolipoyllysine-residue succinyltransferase component of 2-oxoglutarate dehydrogenase complex, mitochondrial from Sus scrofa (Pig).